The primary structure comprises 334 residues: Phosphate acyltransferase (334 aa).

Belongs to the PlsX family. As to quaternary structure, homodimer. Probably interacts with PlsY.

Its subcellular location is the cytoplasm. The enzyme catalyses a fatty acyl-[ACP] + phosphate = an acyl phosphate + holo-[ACP]. It participates in lipid metabolism; phospholipid metabolism. In terms of biological role, catalyzes the reversible formation of acyl-phosphate (acyl-PO(4)) from acyl-[acyl-carrier-protein] (acyl-ACP). This enzyme utilizes acyl-ACP as fatty acyl donor, but not acyl-CoA. This chain is Phosphate acyltransferase, found in Clostridium kluyveri (strain NBRC 12016).